A 346-amino-acid polypeptide reads, in one-letter code: Elongation factor Ts (346 aa).

An involved in Mg(2+) ion dislocation from EF-Tu region spans residues 80–83; the sequence is TDFV.

It belongs to the EF-Ts family.

Its subcellular location is the cytoplasm. Associates with the EF-Tu.GDP complex and induces the exchange of GDP to GTP. It remains bound to the aminoacyl-tRNA.EF-Tu.GTP complex up to the GTP hydrolysis stage on the ribosome. The protein is Elongation factor Ts of Streptococcus uberis (strain ATCC BAA-854 / 0140J).